Here is a 372-residue protein sequence, read N- to C-terminus: 3-dehydroquinate synthase (372 aa).

NAD(+) contacts are provided by residues 116 to 120 (GVVGD), 140 to 141 (TT), K153, K162, and 180 to 183 (TLNT). Residues E195, H260, and H277 each contribute to the Zn(2+) site.

Belongs to the sugar phosphate cyclases superfamily. Dehydroquinate synthase family. Co(2+) is required as a cofactor. The cofactor is Zn(2+). Requires NAD(+) as cofactor.

It localises to the cytoplasm. It carries out the reaction 7-phospho-2-dehydro-3-deoxy-D-arabino-heptonate = 3-dehydroquinate + phosphate. It functions in the pathway metabolic intermediate biosynthesis; chorismate biosynthesis; chorismate from D-erythrose 4-phosphate and phosphoenolpyruvate: step 2/7. Catalyzes the conversion of 3-deoxy-D-arabino-heptulosonate 7-phosphate (DAHP) to dehydroquinate (DHQ). The chain is 3-dehydroquinate synthase from Prochlorococcus marinus (strain MIT 9303).